Reading from the N-terminus, the 434-residue chain is Ribosomal protein uS12 methylthiotransferase RimO (434 aa).

Positions 6–122 (NRVFLLSLGC…ILTAIGARYR (117 aa)) constitute an MTTase N-terminal domain. Residues C15, C51, C85, C146, C150, and C153 each coordinate [4Fe-4S] cluster. A Radical SAM core domain is found at 132 to 361 (TAPGHTSFLK…MELQEGISEE (230 aa)). A TRAM domain is found at 364 to 431 (KRLEGREIAV…PYELFGTVLK (68 aa)).

It belongs to the methylthiotransferase family. RimO subfamily. It depends on [4Fe-4S] cluster as a cofactor.

The protein resides in the cytoplasm. It carries out the reaction L-aspartate(89)-[ribosomal protein uS12]-hydrogen + (sulfur carrier)-SH + AH2 + 2 S-adenosyl-L-methionine = 3-methylsulfanyl-L-aspartate(89)-[ribosomal protein uS12]-hydrogen + (sulfur carrier)-H + 5'-deoxyadenosine + L-methionine + A + S-adenosyl-L-homocysteine + 2 H(+). In terms of biological role, catalyzes the methylthiolation of an aspartic acid residue of ribosomal protein uS12. This Chlorobium phaeovibrioides (strain DSM 265 / 1930) (Prosthecochloris vibrioformis (strain DSM 265)) protein is Ribosomal protein uS12 methylthiotransferase RimO.